The primary structure comprises 689 residues: DNA ligase (689 aa).

Residues 40–44 (DQEYD), 89–90 (SL), and Glu122 each bind NAD(+). Lys124 acts as the N6-AMP-lysine intermediate in catalysis. Positions 145, 182, 300, and 325 each coordinate NAD(+). Zn(2+)-binding residues include Cys419, Cys422, Cys437, and Cys442. A BRCT domain is found at 600-689 (QADGVLTGAT…SADASADASA (90 aa)).

Belongs to the NAD-dependent DNA ligase family. LigA subfamily. The cofactor is Mg(2+). It depends on Mn(2+) as a cofactor.

It catalyses the reaction NAD(+) + (deoxyribonucleotide)n-3'-hydroxyl + 5'-phospho-(deoxyribonucleotide)m = (deoxyribonucleotide)n+m + AMP + beta-nicotinamide D-nucleotide.. In terms of biological role, DNA ligase that catalyzes the formation of phosphodiester linkages between 5'-phosphoryl and 3'-hydroxyl groups in double-stranded DNA using NAD as a coenzyme and as the energy source for the reaction. It is essential for DNA replication and repair of damaged DNA. In Gemmatimonas aurantiaca (strain DSM 14586 / JCM 11422 / NBRC 100505 / T-27), this protein is DNA ligase.